A 394-amino-acid polypeptide reads, in one-letter code: S-adenosylmethionine synthase (394 aa).

His16 contributes to the ATP binding site. Asp18 provides a ligand contact to Mg(2+). Glu44 is a K(+) binding site. Residues Glu57 and Gln99 each contribute to the L-methionine site. A flexible loop region spans residues 99–109 (QSPDIAQGVDE). ATP contacts are provided by residues 173–175 (DAK), 240–241 (RF), Asp249, 255–256 (RK), Ala272, and Lys276. Asp249 contributes to the L-methionine binding site. Lys280 lines the L-methionine pocket.

The protein belongs to the AdoMet synthase family. As to quaternary structure, homotetramer; dimer of dimers. It depends on Mg(2+) as a cofactor. K(+) serves as cofactor.

Its subcellular location is the cytoplasm. It carries out the reaction L-methionine + ATP + H2O = S-adenosyl-L-methionine + phosphate + diphosphate. It participates in amino-acid biosynthesis; S-adenosyl-L-methionine biosynthesis; S-adenosyl-L-methionine from L-methionine: step 1/1. Catalyzes the formation of S-adenosylmethionine (AdoMet) from methionine and ATP. The overall synthetic reaction is composed of two sequential steps, AdoMet formation and the subsequent tripolyphosphate hydrolysis which occurs prior to release of AdoMet from the enzyme. The polypeptide is S-adenosylmethionine synthase (Lacticaseibacillus paracasei (strain ATCC 334 / BCRC 17002 / CCUG 31169 / CIP 107868 / KCTC 3260 / NRRL B-441) (Lactobacillus paracasei)).